We begin with the raw amino-acid sequence, 316 residues long: Phosphate acyltransferase (316 aa).

The protein belongs to the PlsX family. As to quaternary structure, homodimer. Probably interacts with PlsY.

It localises to the cytoplasm. It carries out the reaction a fatty acyl-[ACP] + phosphate = an acyl phosphate + holo-[ACP]. Its pathway is lipid metabolism; phospholipid metabolism. In terms of biological role, catalyzes the reversible formation of acyl-phosphate (acyl-PO(4)) from acyl-[acyl-carrier-protein] (acyl-ACP). This enzyme utilizes acyl-ACP as fatty acyl donor, but not acyl-CoA. The chain is Phosphate acyltransferase from Chlamydia caviae (strain ATCC VR-813 / DSM 19441 / 03DC25 / GPIC) (Chlamydophila caviae).